The chain runs to 106 residues: UPF0145 protein Cthe_0398 (106 aa).

This sequence belongs to the UPF0145 family.

The sequence is that of UPF0145 protein Cthe_0398 from Acetivibrio thermocellus (strain ATCC 27405 / DSM 1237 / JCM 9322 / NBRC 103400 / NCIMB 10682 / NRRL B-4536 / VPI 7372) (Clostridium thermocellum).